Here is a 353-residue protein sequence, read N- to C-terminus: Cellulose-complementing protein (353 aa).

Disordered stretches follow at residues 1–21 (MSAS…PQDF), 75–94 (PQIA…PAIV), and 117–337 (AVPA…SPRP). The span at 80–91 (APPPPPVVPDPP) shows a compositional bias: pro residues. Low complexity-rich tracts occupy residues 117–132 (AVPA…VQAA) and 142–164 (IAEQ…VAAA). Residues 165-175 (PVPPDPAPVTP) are compositionally biased toward pro residues. Composition is skewed to polar residues over residues 196-226 (QVRT…SSIS) and 278-304 (STRS…QASR).

This chain is Cellulose-complementing protein (ccpAX), found in Komagataeibacter xylinus (Gluconacetobacter xylinus).